The following is a 722-amino-acid chain: G2-specific protein kinase fin1 (722 aa).

A Protein kinase domain is found at 4–281; sequence YKILECIGHG…TYQLLRSPIL (278 aa). Residues 10–18 and K33 each bind ATP; that span reads IGHGSFGRI. Catalysis depends on D151, which acts as the Proton acceptor. The segment at 528-557 is disordered; it reads LSVESDETAVSASSGESVPTDSTLTDTKSK. Residues 535–546 show a composition bias toward polar residues; it reads TAVSASSGESVP.

This sequence belongs to the protein kinase superfamily. Ser/Thr protein kinase family. NIMA subfamily.

It is found in the cytoplasm. The protein localises to the cytoskeleton. The protein resides in the microtubule organizing center. Its subcellular location is the spindle pole body. It carries out the reaction L-seryl-[protein] + ATP = O-phospho-L-seryl-[protein] + ADP + H(+). It catalyses the reaction L-threonyl-[protein] + ATP = O-phospho-L-threonyl-[protein] + ADP + H(+). Functionally, promotes chromosome condensation and nuclear envelope dynamics during mitosis. Activity appears at metaphase-anaphase transition. This Schizosaccharomyces pombe (strain 972 / ATCC 24843) (Fission yeast) protein is G2-specific protein kinase fin1 (fin1).